The following is a 930-amino-acid chain: Nonribosomal peptide synthetase acyN (930 aa).

The interval 15 to 436 (LDPQDNKISV…AGRAKETIIV (422 aa)) is adenylation (A) domain. The 80-residue stretch at 567-646 (APSNETEATI…GLAGTLETLM (80 aa)) folds into the Carrier domain. Ser604 carries the post-translational modification O-(pantetheine 4'-phosphoryl)serine. Residues 665-914 (PLWLVHPGVG…HYTMLGPDNI (250 aa)) form a thioesterase (TE) domain region.

This sequence belongs to the NRP synthetase family.

The catalysed reaction is 2 3-phenylpyruvate + 2 ATP = polyporic acid + 2 AMP + 2 diphosphate + H(+). Its pathway is secondary metabolite biosynthesis. Hydroxyphenylpyruvate acts more like a competitive inhibitor rather than a substrate. Nonribosomal peptide synthetase that mediates the biosynthesis of polyporic acid via the condensation of 2 phenylpyruvate units. Polyporic acid is further hydroxylaed by the cytochrome P450 monooxygenase MO6277 into less toxic ascocorynin. This chain is Nonribosomal peptide synthetase acyN, found in Ascocoryne sarcoides (Purple jellydisc fungus).